Consider the following 322-residue polypeptide: Undecaprenyl-phosphate 4-deoxy-4-formamido-L-arabinose transferase (322 aa).

Residues 1–235 (MFEIHPVKKV…TCLTTTPLRM (235 aa)) are Cytoplasmic-facing. Residues 236 to 256 (LSLLGSIIAIGGFSIAVLLVI) form a helical membrane-spanning segment. At 257–269 (LRLTFGPQWAAEG) the chain is on the periplasmic side. The helical transmembrane segment at 270-290 (VFMLFAVLFTFIGAQFIGMGL) threads the bilayer. The Cytoplasmic portion of the chain corresponds to 291–322 (LGEYIGRIYTDVRARPRYFVQQVIRPSSKENE).

Belongs to the glycosyltransferase 2 family.

The protein localises to the cell inner membrane. It catalyses the reaction UDP-4-deoxy-4-formamido-beta-L-arabinose + di-trans,octa-cis-undecaprenyl phosphate = 4-deoxy-4-formamido-alpha-L-arabinopyranosyl di-trans,octa-cis-undecaprenyl phosphate + UDP. It participates in glycolipid biosynthesis; 4-amino-4-deoxy-alpha-L-arabinose undecaprenyl phosphate biosynthesis; 4-amino-4-deoxy-alpha-L-arabinose undecaprenyl phosphate from UDP-4-deoxy-4-formamido-beta-L-arabinose and undecaprenyl phosphate: step 1/2. It functions in the pathway bacterial outer membrane biogenesis; lipopolysaccharide biosynthesis. Functionally, catalyzes the transfer of 4-deoxy-4-formamido-L-arabinose from UDP to undecaprenyl phosphate. The modified arabinose is attached to lipid A and is required for resistance to polymyxin and cationic antimicrobial peptides. In Shigella flexneri serotype 5b (strain 8401), this protein is Undecaprenyl-phosphate 4-deoxy-4-formamido-L-arabinose transferase.